Consider the following 478-residue polypeptide: Nuclear distribution protein PAC1 (478 aa).

A LisH domain is found at 9–41; it reads QAEELHKAMIAYLLSANLPKSAAALREELADSV. The stretch at 60 to 87 forms a coiled coil; it reads TSVVRLQKKIMDLESRNNALQSELDSAT. WD repeat units lie at residues 113 to 154, 156 to 196, 200 to 247, 250 to 289, 292 to 352, 354 to 393, 398 to 439, and 440 to 477; these read SHRE…RTIK, HTKA…KNIR, GHDH…CVKT, GHVD…TKST, GHEH…IKTL, GHDN…KCVR, AHGH…AASA, and INGV…RVFA.

Belongs to the WD repeat LIS1/nudF family. In terms of assembly, self-associates. Interacts with NDL1 and dynein.

Its subcellular location is the cytoplasm. The protein localises to the cytoskeleton. It localises to the spindle pole. In terms of biological role, positively regulates the activity of the minus-end directed microtubule motor protein dynein. May enhance dynein-mediated microtubule sliding by targeting dynein to the microtubule plus end. Required for nuclear migration during vegetative growth as well as development. Required for retrograde early endosome (EE) transport from the hyphal tip. Required for localization of dynein to the mitotic spindle poles. Recruits additional proteins to the dynein complex at SPBs. This chain is Nuclear distribution protein PAC1, found in Paracoccidioides brasiliensis (strain Pb18).